An 871-amino-acid chain; its full sequence is Speckle targeted PIP5K1A-regulated poly(A) polymerase (871 aa).

The Matrin-type zinc finger occupies 16-46 (FRCCLCHITTANQPSLDAHLGGRKHRHLVEL). An RRM domain is found at 56-128 (RSVFVSGFPR…RRLRVRPREQ (73 aa)). Residue serine 205 participates in ATP binding. Mg(2+) is bound by residues aspartate 216 and aspartate 218. UTP is bound by residues aspartate 216 and aspartate 218. Positions 252 to 321 (QALACTPASP…QEDQGDGDQG (70 aa)) are disordered. Pro residues predominate over residues 259 to 269 (ASPPDSQPPAS). Position 392 (asparagine 392) interacts with ATP. UTP is bound by residues asparagine 392, arginine 414, tyrosine 432, and histidine 547. The PAP-associated domain occupies 489 to 547 (LSSLLAQFFSCVSCWDLRGSLLSLREGQALSVAGGLPSNLSEGLRLGPMNLQDPFDLSH). The tract at residues 596–871 (SSPSSILSAT…LPQALRNLLK (276 aa)) is KA1; binds the bulging loops of U6 snRNA but is dispensable for terminal uridylyltransferase activity. Residues 636-684 (GTKRLRSEGGGPGEPPQGGTSKRAKLDGQKKSCEEGPEEQQGCAGEHGE) are disordered. Residues 659–669 (AKLDGQKKSCE) show a composition bias toward basic and acidic residues. Serine 748 is modified (phosphoserine).

It belongs to the DNA polymerase type-B-like family. In terms of assembly, associates with the cleavage and polyadenylation specificity factor (CPSF) complex. Interacts with CPSF1 and CPSF3; the interaction is direct. Interacts with PIP5K1A. Requires Mg(2+) as cofactor. The cofactor is Mn(2+). In terms of processing, phosphorylated by CK1 in the proline-rich (Pro-rich) region.

The protein localises to the nucleus. It localises to the nucleolus. It is found in the nucleus speckle. It catalyses the reaction RNA(n) + UTP = RNA(n)-3'-uridine ribonucleotide + diphosphate. The catalysed reaction is RNA(n) + ATP = RNA(n)-3'-adenine ribonucleotide + diphosphate. Its activity is regulated as follows. Adenylyltransferase activity is specifically phosphatidylinositol 4,5-bisphosphate (PtdIns(4,5)P2). Its function is as follows. Poly(A) polymerase that creates the 3'-poly(A) tail of specific pre-mRNAs. Localizes to nuclear speckles together with PIP5K1A and mediates polyadenylation of a select set of mRNAs, such as HMOX1. In addition to polyadenylation, it is also required for the 3'-end cleavage of pre-mRNAs: binds to the 3'UTR of targeted pre-mRNAs and promotes the recruitment and assembly of the CPSF complex on the 3'UTR of pre-mRNAs. In addition to adenylyltransferase activity, also has uridylyltransferase activity. However, the ATP ratio is higher than UTP in cells, suggesting that it functions primarily as a poly(A) polymerase. Acts as a specific terminal uridylyltransferase for U6 snRNA in vitro: responsible for a controlled elongation reaction that results in the restoration of the four 3'-terminal UMP-residues found in newly transcribed U6 snRNA. Not involved in replication-dependent histone mRNA degradation. The polypeptide is Speckle targeted PIP5K1A-regulated poly(A) polymerase (TUT1) (Bos taurus (Bovine)).